A 403-amino-acid chain; its full sequence is MQRAMTVVPHLGLRLQALPLALGRPLSRAQDVLRRTPLYDFHLAHGGKMVAFAGWSLPVQYRDSHVDSHLHTRRHCSLFDVSHMLQTKILGCDRVKLMESLVVGDIAELRPNQGTLSLFTNEAGGIEDDLIVTSTSEGYLYVVSNAGCWDKDLALMQGKVRELQNMGSDVSLEVVDNALLALQGPTATQVLQAGVADDLRKLPFMTSAVMEVFGVSGCRVTRCGYTGEDGVEISVPAAAAVRLAAALLENPEVKLAGLAARDSLRLEAGLCLYGSDIDEHTTPVEGSLSWTLGKRRRAAMDFPGASVIIAQLKGKVQRRRVGLTCEGAPVRAHSPILNMEGTVIGTVTSGCPSPCLKKNVAMGYVPSEYSRPGTPLLVEVRRKQQMAVVSKMPFVTTNYYTLK.

A mitochondrion-targeting transit peptide spans methionine 1 to arginine 28. Substrate is bound by residues glutamate 232, arginine 261, and tyrosine 399.

This sequence belongs to the GcvT family. As to quaternary structure, the glycine cleavage system is composed of four proteins: P, T, L and H.

The protein resides in the mitochondrion. The catalysed reaction is N(6)-[(R)-S(8)-aminomethyldihydrolipoyl]-L-lysyl-[protein] + (6S)-5,6,7,8-tetrahydrofolate = N(6)-[(R)-dihydrolipoyl]-L-lysyl-[protein] + (6R)-5,10-methylene-5,6,7,8-tetrahydrofolate + NH4(+). Its function is as follows. The glycine cleavage system catalyzes the degradation of glycine. The sequence is that of Aminomethyltransferase, mitochondrial from Canis lupus familiaris (Dog).